A 214-amino-acid polypeptide reads, in one-letter code: MKFFIDTADVKEIREANELGLVDGVTTNPSLIAKSGRRFEEVIKEITGIVDGPISAEVISLEHDGMIAEATELAKIHPNIVIKLPMTPEGLKATKTLYKRGIKTNVTLIFTPMQALLAAKAGATYVSPFVGRLDDISQNGMGIIQEIRTIFDNYGMDAEIIVASIRNPIHVLDSALIGADVCTIPYSVMLQLAKHPLTDAGIKKFLEDWEKVPK.

Lys83 serves as the catalytic Schiff-base intermediate with substrate.

The protein belongs to the transaldolase family. Type 3B subfamily.

Its subcellular location is the cytoplasm. The enzyme catalyses D-sedoheptulose 7-phosphate + D-glyceraldehyde 3-phosphate = D-erythrose 4-phosphate + beta-D-fructose 6-phosphate. It participates in carbohydrate degradation; pentose phosphate pathway; D-glyceraldehyde 3-phosphate and beta-D-fructose 6-phosphate from D-ribose 5-phosphate and D-xylulose 5-phosphate (non-oxidative stage): step 2/3. Functionally, transaldolase is important for the balance of metabolites in the pentose-phosphate pathway. This Citrifermentans bemidjiense (strain ATCC BAA-1014 / DSM 16622 / JCM 12645 / Bem) (Geobacter bemidjiensis) protein is Probable transaldolase.